The sequence spans 133 residues: Small ribosomal subunit protein eS24 (133 aa).

Methionine 1 carries the post-translational modification N-acetylmethionine. A Phosphothreonine modification is found at threonine 9. Lysine 37 is covalently cross-linked (Glycyl lysine isopeptide (Lys-Gly) (interchain with G-Cter in SUMO2)). The disordered stretch occupies residues 92 to 133 (ARHGLYEKKKTSRKQRKERKNRMKKVRGTAKANVGAGKKPKE). The segment covering 101-119 (KTSRKQRKERKNRMKKVRG) has biased composition (basic residues).

Belongs to the eukaryotic ribosomal protein eS24 family. As to quaternary structure, component of the small ribosomal subunit. Part of the small subunit (SSU) processome, composed of more than 70 proteins and the RNA chaperone small nucleolar RNA (snoRNA) U3.

Its subcellular location is the cytoplasm. It is found in the nucleus. It localises to the nucleolus. Functionally, component of the small ribosomal subunit. The ribosome is a large ribonucleoprotein complex responsible for the synthesis of proteins in the cell. Required for processing of pre-rRNA and maturation of 40S ribosomal subunits. Part of the small subunit (SSU) processome, first precursor of the small eukaryotic ribosomal subunit. During the assembly of the SSU processome in the nucleolus, many ribosome biogenesis factors, an RNA chaperone and ribosomal proteins associate with the nascent pre-rRNA and work in concert to generate RNA folding, modifications, rearrangements and cleavage as well as targeted degradation of pre-ribosomal RNA by the RNA exosome. This is Small ribosomal subunit protein eS24 (RPS24) from Oryctolagus cuniculus (Rabbit).